Here is a 105-residue protein sequence, read N- to C-terminus: Synaptic plasticity regulator PANTS (105 aa).

Belongs to the UPF0545 family. In terms of assembly, interacts with RTN4 isoform A/Nogo-A; the interaction results in enhanced RTN4-mediated inhibition of AMPA receptor clustering. Also interacts with NCAM1, RANBP2 and CCT8. In terms of processing, rapidly degraded by proteolysis following neuronal stimulation, resulting in increased AMPA receptor clustering. In the postnatal brain, expressed diffusely throughout the hippocampus at a low level at 8 weeks (at protein level). At 16 weeks, strongly expressed in the stratum lucidum of the hippocampus (at protein level). In developing and aging brain, expression is strongest in hippocampus, especially in areas CA3 and CA2, throughout the dorsoventral axis.

It is found in the synapse. It localises to the synaptic cleft. In terms of biological role, negatively regulates long-term potentiation and modulates adult synaptic plasticity. Stabilizes the interaction of RTN4 isoform A/Nogo-A with its receptors, inhibiting clustering of postsynaptic AMPA receptors at synaptic sites. Upon neuronal stimulation, degraded at synapses, reducing RTN4 signaling and allowing AMPA receptor clustering at individual synapses. This Mus musculus (Mouse) protein is Synaptic plasticity regulator PANTS.